The primary structure comprises 435 residues: Protoheme IX farnesyltransferase, mitochondrial (435 aa).

Residues 1–35 (MPALCATYLIHSGNLRACLRIVPLTKPSVVIAYRH) constitute a mitochondrion transit peptide. 6 helical membrane passes run 135–155 (VLVM…ATVL), 157–177 (LLSL…INMG), 212–232 (GVIG…LLGA), 250–270 (IINT…GWAA), 324–344 (VALR…YYGI), and 401–421 (FWVS…HKKG).

This sequence belongs to the UbiA prenyltransferase family.

Its subcellular location is the mitochondrion membrane. Converts protoheme IX and farnesyl diphosphate to heme O. This chain is Protoheme IX farnesyltransferase, mitochondrial (COX10), found in Eremothecium gossypii (strain ATCC 10895 / CBS 109.51 / FGSC 9923 / NRRL Y-1056) (Yeast).